The chain runs to 185 residues: ATP-dependent protease subunit HslV (185 aa).

T13 is an active-site residue. Positions 167, 170, and 173 each coordinate Na(+).

It belongs to the peptidase T1B family. HslV subfamily. As to quaternary structure, a double ring-shaped homohexamer of HslV is capped on each side by a ring-shaped HslU homohexamer. The assembly of the HslU/HslV complex is dependent on binding of ATP.

Its subcellular location is the cytoplasm. It catalyses the reaction ATP-dependent cleavage of peptide bonds with broad specificity.. Its activity is regulated as follows. Allosterically activated by HslU binding. Functionally, protease subunit of a proteasome-like degradation complex believed to be a general protein degrading machinery. This Sinorhizobium medicae (strain WSM419) (Ensifer medicae) protein is ATP-dependent protease subunit HslV.